The primary structure comprises 1403 residues: MNHEVMNLFNPQALAQIFDSIRISIASPENILSWSYGEIKKPETINYRTFKPERDGLFCARIFGPIKDYECLCGKYKRMKYKGIICEKCGVEVTLSRVRRERMGHIELAAPVAHIWFLKSLPGRISTLLDLTLKDIERILYFESYIVTEPGLTSLKLHQLLSEEEYMLAIDKFGEDQFTAMIGAEAIYDLLAGMELDKIANDLHAELAETTSELKQKKLIKRLKIVENFLESGNKPEWMIMKTIPVIPPDLRPLVPLDGGRFATSDLNDLYRRVINRNNRLKRLIELRAPGIIVRNEKRMVQEAVDALFDNGRRGRVITGANKRPLKSLSDMLKGKQGRFRQNLLGKRVDYSGRSVIVTGPELKLHQCGLPKKMALELFKPFIYARLDAKGYSSTVKQAKKLVEKEHPEVWDILDEVIREHPVLLNRAPTLHRLGIQAFEPVLIEGKAIQLHPLVCTAFNADFDGDQMAVHVPLSLEAQLEARVLMMSTNNILHPANGAPIIVPSQDMVLGLYYLSIVSEKEPGEGMAFADMGELHHALENKVVTLHTKIKGRFKNIDKDGKEVAQLYDTTPGRLIIGELLPKNPNISFDIVNQEMTKKNLSKMIDQVYRHCGQKETVVFCDRIMQLGFSHACRAGISFGKDDMVIPESKSRLVAETEALVKEYEQQYDDGLITQGEKYNKVVDAWGKCTDRIADEMMKGIQAVKFDPKTGRQQRMNSIYMMSHSGARGSANQMRQLAGMRGLMAKPSGEIIETPIISNFKEGLTVNEYFNSTHGARKGLADTALKTANSGYLTRRLVDVAQDAIISAVDCGTIKGLTMQPIIDAGQIVASLGQRILGRTALLDILHPVSGEVIIEGGTMIEEADVLKIEEARIQSVQIRSALTCETRLGVCAKCYGRDLARGTPVNQGEAVGVIAAQSIGEPGTQLTMRTFHLGGTAQVVDSSYFESSYEGIVELRNRNVVRNSEGHLVVMGRNMAVLIKDENGKERAVHRISYGARLFVDDGDIIKRGQRIAEWDPYTRPILTEVDGYVGFEDMVDGLSVTETTDESTGITKRQVIDWRVNPRGADLKPAMIIHSDKQGKNIAKLHKGGEARYVMSVETILSVEPGSHVKAGDVIARLPMESAKTKDITGGLPRVAELFEARRPKDHAIIAEISGTVRFGRGYKNKRRIIIEPNDETLEPVEYLIPKGKLFHLQEGDKIEKGDYILDGNPAPHDILAIKGVEALASYLVNEIQEVYRLQGVLINDKHIEVIVRQMLQKVEITESGDSDYIPGDNVDRIELDEINDHLIAEGKKPASGTPILLGITKASLQTPSFISAASFQETTRVLTEAAVSGKIDTLQGLKENVIVGRLIPAGTGGTIAQIRRIATVRDDLIVDEQRKSSNDGISKAMLTDMTANAAAE.

Residues Cys71, Cys73, Cys86, and Cys89 each contribute to the Zn(2+) site. Asp462, Asp464, and Asp466 together coordinate Mg(2+). Positions 811, 885, 892, and 895 each coordinate Zn(2+).

This sequence belongs to the RNA polymerase beta' chain family. The RNAP catalytic core consists of 2 alpha, 1 beta, 1 beta' and 1 omega subunit. When a sigma factor is associated with the core the holoenzyme is formed, which can initiate transcription. Requires Mg(2+) as cofactor. The cofactor is Zn(2+).

The enzyme catalyses RNA(n) + a ribonucleoside 5'-triphosphate = RNA(n+1) + diphosphate. Functionally, DNA-dependent RNA polymerase catalyzes the transcription of DNA into RNA using the four ribonucleoside triphosphates as substrates. This is DNA-directed RNA polymerase subunit beta' from Bartonella bacilliformis (strain ATCC 35685 / KC583 / Herrer 020/F12,63).